Reading from the N-terminus, the 89-residue chain is Large ribosomal subunit protein bL27 (89 aa).

The tract at residues 1–20 (MAHKKAGGSSRNGRDSAGQR) is disordered.

Belongs to the bacterial ribosomal protein bL27 family.

This Paramagnetospirillum magneticum (strain ATCC 700264 / AMB-1) (Magnetospirillum magneticum) protein is Large ribosomal subunit protein bL27.